A 134-amino-acid polypeptide reads, in one-letter code: Large ribosomal subunit protein eL14y (134 aa).

The protein belongs to the eukaryotic ribosomal protein eL14 family.

This is Large ribosomal subunit protein eL14y (RPL14B) from Arabidopsis thaliana (Mouse-ear cress).